The primary structure comprises 77 residues: Conotoxin Vc6b (77 aa).

A signal peptide spans 1–22; it reads MKLTCMMIVAVLFLTANTFVTA. The propeptide occupies 23–47; sequence DDSGNGMENLFPKAGHEMENLEASN. 3 cysteine pairs are disulfide-bonded: Cys52–Cys66, Cys59–Cys72, and Cys67–Cys76.

In terms of tissue distribution, expressed by the venom duct.

The protein resides in the secreted. The sequence is that of Conotoxin Vc6b from Conus victoriae (Queen Victoria cone).